The primary structure comprises 563 residues: ATP-dependent RNA helicase DeaD (563 aa).

The Q motif signature appears at 13–41 (ATFADLQIHPRVLRAIGDVGYESPTAIQA). Positions 44–215 (IPALMAGSDV…AKYLHDPFEV (172 aa)) constitute a Helicase ATP-binding domain. 57-64 (AQTGTGKT) serves as a coordination point for ATP. The DEAD box signature appears at 163 to 166 (DEAD). Positions 226-385 (NISQSYIQVA…AQLPTVEDVN (160 aa)) constitute a Helicase C-terminal domain. Disordered stretches follow at residues 441–470 (LMAPDPPLSRRNRDQRRDRPQRPKRRPDLT) and 543–563 (YRPPDAARRHNGGKPRRKHVG). Positions 451–461 (RNRDQRRDRPQ) are enriched in basic and acidic residues. Residues 551-563 (RHNGGKPRRKHVG) are compositionally biased toward basic residues.

It belongs to the DEAD box helicase family. DeaD/CsdA subfamily.

It is found in the cytoplasm. It catalyses the reaction ATP + H2O = ADP + phosphate + H(+). Functionally, DEAD-box RNA helicase involved in various cellular processes at low temperature, including ribosome biogenesis, mRNA degradation and translation initiation. The polypeptide is ATP-dependent RNA helicase DeaD (Mycobacterium tuberculosis (strain CDC 1551 / Oshkosh)).